The sequence spans 111 residues: Nucleoid-associated protein PputGB1_3833 (111 aa).

Disordered regions lie at residues 1–25 (MMKG…KMQE) and 87–111 (EQSS…KMPF).

Belongs to the YbaB/EbfC family. In terms of assembly, homodimer.

The protein resides in the cytoplasm. It localises to the nucleoid. Its function is as follows. Binds to DNA and alters its conformation. May be involved in regulation of gene expression, nucleoid organization and DNA protection. In Pseudomonas putida (strain GB-1), this protein is Nucleoid-associated protein PputGB1_3833.